Reading from the N-terminus, the 206-residue chain is Small ribosomal subunit protein uS4 (206 aa).

Residues 96–156 (GRLDNVVYRM…EKSKKQARIK (61 aa)) form the S4 RNA-binding domain.

Belongs to the universal ribosomal protein uS4 family. Part of the 30S ribosomal subunit. Contacts protein S5. The interaction surface between S4 and S5 is involved in control of translational fidelity.

Its function is as follows. One of the primary rRNA binding proteins, it binds directly to 16S rRNA where it nucleates assembly of the body of the 30S subunit. In terms of biological role, with S5 and S12 plays an important role in translational accuracy. The protein is Small ribosomal subunit protein uS4 of Haemophilus influenzae (strain ATCC 51907 / DSM 11121 / KW20 / Rd).